We begin with the raw amino-acid sequence, 541 residues long: Protein wntless homolog (541 aa).

The Cytoplasmic portion of the chain corresponds to 1-15 (MAGAIIENMSTKKLC). The helical transmembrane segment at 16-36 (IVGGILLVFQIIAFLVGGLIA) threads the bilayer. Residues 37-232 (PGPTTAVSYM…GIHQNGGFTK (196 aa)) lie on the Lumenal side of the membrane. An interaction with Wnt proteins region spans residues 101–232 (MEMSPWFQFM…GIHQNGGFTK (132 aa)). The chain crosses the membrane as a helical span at residues 233–253 (VWFAMKTFLTPSIFIIMVWYW). Topologically, residues 254–268 (RRITMMSRPPVLLEK) are cytoplasmic. Residues 269–289 (VIFALGISMTFINIPVEWFSI) traverse the membrane as a helical segment. Over 290 to 303 (GFDWTWMLLFGDIR) the chain is Lumenal. The chain crosses the membrane as a helical span at residues 304 to 324 (QGIFYAMLLSFWIIFCGEHMM). The Cytoplasmic segment spans residues 325 to 331 (DQHERNH). A helical membrane pass occupies residues 332-352 (IAGYWKQVGPIAVGSFCLFIF). The Lumenal portion of the chain corresponds to 353–380 (DMCERGVQLTNPFYSIWTTDIGTELAMA). A helical membrane pass occupies residues 381 to 401 (FIIVAGICLCLYFLFLCFMVF). Over 402–431 (QVFRNISGKQSSLPAMSKVRRLHYEGLIFR) the chain is Cytoplasmic. Residues 432–452 (FKFLMLITLACAAMTVIFFIV) traverse the membrane as a helical segment. At 453–471 (SQVTEGHWKWGGVTVQVNS) the chain is on the lumenal side. A helical transmembrane segment spans residues 472-492 (AFFTGIYGMWNLYVFALMFLY). The Cytoplasmic portion of the chain corresponds to 493–541 (APSHKNYGEDQSNGDLGVHSGEELQLTTTITHVDGPTEIYKLTRKEAQE).

This sequence belongs to the wntless family. As to quaternary structure, interacts with WNT3A. Interacts with WNT1, WNT3 and WNT5A. N-glycosylated.

The protein resides in the golgi apparatus membrane. Its subcellular location is the cytoplasmic vesicle membrane. It localises to the cell membrane. It is found in the endoplasmic reticulum membrane. The protein localises to the early endosome membrane. Its function is as follows. Regulates Wnt proteins sorting and secretion in a feedback regulatory mechanism. This reciprocal interaction plays a key role in the regulation of expression, subcellular location, binding and organelle-specific association of Wnt proteins. Plays also an important role in establishment of the anterior-posterior body axis formation during development. The polypeptide is Protein wntless homolog (WLS) (Homo sapiens (Human)).